Here is a 192-residue protein sequence, read N- to C-terminus: Type-4 uracil-DNA glycosylase (192 aa).

The [4Fe-4S] cluster site is built by Cys18 and Cys21. Residues 45–47, Phe59, and Asn85 contribute to the uracil site; that span reads GEG. Residues Cys89 and Cys105 each coordinate [4Fe-4S] cluster. His161 lines the uracil pocket.

It belongs to the uracil-DNA glycosylase (UDG) superfamily. Type 4 (UDGa) family.

It catalyses the reaction Hydrolyzes single-stranded DNA or mismatched double-stranded DNA and polynucleotides, releasing free uracil.. Removes uracil bases that are present in DNA as a result of either deamination of cytosine or misincorporation of dUMP instead of dTMP. Can remove uracil from double-stranded DNA containing either a U/G or U/A base pair as well as from single-stranded DNA. This Thermotoga maritima (strain ATCC 43589 / DSM 3109 / JCM 10099 / NBRC 100826 / MSB8) protein is Type-4 uracil-DNA glycosylase.